A 396-amino-acid chain; its full sequence is Calcium-responsive transactivator (396 aa).

Residues 1–148 (MSVAFASARP…TLPTTSMSIS (148 aa)) form an N-terminal auto-inhibitory domain; necessary for interaction with SMARCA4/BRG1 region. The SH2-binding signature appears at 50-53 (YQQI). Disordered stretches follow at residues 72–162 (QSLL…SQGV), 192–280 (QAAT…GDYA), and 311–396 (SQQQ…NYQQ). A compositionally biased stretch (low complexity) spans 90 to 106 (LTQSGSSQGLHSQGSLS). 2 stretches are compositionally biased toward polar residues: residues 107-122 (DAIS…LQGQ) and 128-147 (SHVS…SMSI). Positions 149–232 (GPGYSHAGPA…GSSMMGQRPM (84 aa)) are methionine-rich intra-molecular domain. 3 stretches are compositionally biased toward low complexity: residues 199–229 (SSAQ…MMGQ), 238–261 (SQQG…SHSQ), and 311–369 (SQQQ…YGSY). Residues 246-317 (YLGQEEYYGE…SQYSQQQAGY (72 aa)) are MFD domain. The segment at 334 to 396 (SQQSYPGQQQ…EQGQYGNYQQ (63 aa)) is necessary for nuclear localization. The SH2-binding motif lies at 353-356 (SQYP). The SH3-binding motif lies at 371–379 (APQTAPSAQ). Positions 384 to 396 (YGYEQGQYGNYQQ) are enriched in low complexity. Residues 387–396 (EQGQYGNYQQ) are necessary for interaction with CREBBP and for the recruitment of CREBBP to the nuclear bodies. The SH2-binding signature appears at 391-394 (YGNY).

Belongs to the SS18 family. Homodimer. Dimerization may be necessary for its function in neuronal dendritic development. Interacts (via C-terminus) with CREBBP (via N-terminus), EP300 and SMARCA4/BRG1. Interacts with the nBAF complex. Association with CREBBP facilitates transcription while the association with SMARCA4/BRG1 suppresses CREST-mediated transcription in resting neurons. Ubiquitous; with lowest levels in spleen.

Its subcellular location is the nucleus. The protein resides in the chromosome. It localises to the centromere. The protein localises to the kinetochore. In terms of biological role, transcriptional activator which is required for calcium-dependent dendritic growth and branching in cortical neurons. Recruits CREB-binding protein (CREBBP) to nuclear bodies. Component of the CREST-BRG1 complex, a multiprotein complex that regulates promoter activation by orchestrating a calcium-dependent release of a repressor complex and a recruitment of an activator complex. In resting neurons, transcription of the c-FOS promoter is inhibited by BRG1-dependent recruitment of a phospho-RB1-HDAC1 repressor complex. Upon calcium influx, RB1 is dephosphorylated by calcineurin, which leads to release of the repressor complex. At the same time, there is increased recruitment of CREBBP to the promoter by a CREST-dependent mechanism, which leads to transcriptional activation. The CREST-BRG1 complex also binds to the NR2B promoter, and activity-dependent induction of NR2B expression involves a release of HDAC1 and recruitment of CREBBP. This Homo sapiens (Human) protein is Calcium-responsive transactivator (SS18L1).